The following is an 835-amino-acid chain: uncharacterized protein (835 aa).

Disordered regions lie at residues 1–38, 317–477, 489–668, 721–750, and 810–835; these read MKTSRLSTVPTSSSSTSTSSSPSSSSGSGSSTNTVGSR, DFDL…QSGR, SLSK…IKRR, DLENNNNNNSNSNSNSNSNNNSKRSSVSSF, and QEQQEGEQQEERQQEQILDEDDELMF. Composition is skewed to low complexity over residues 7–37, 328–351, and 361–395; these read STVPTSSSSTSTSSSPSSSSGSGSSTNTVGS, NNNNNNDNNNNNNTSTTRSKTPTT, and SSTNTTPTTTTTTTTTTTPNKTQSSSSTSLRSGSS. Composition is skewed to polar residues over residues 396–406 and 415–424; these read IGNRTEVSSSI and IIRSKSSLGT. Positions 432-442 are enriched in gly residues; that stretch reads GGSGGGGGGGM. Positions 449-477 are enriched in polar residues; the sequence is PISKTPTTMITKTASSSSPNLATSTQSGR. The segment covering 489 to 510 has biased composition (low complexity); it reads SLSKQSSSSNLTRSLPPIIKSP. The span at 511-521 shows a compositional bias: pro residues; that stretch reads ISPPGPTPPAP. The segment covering 522-629 has biased composition (low complexity); sequence TLTKSKSTPS…STTSSATKKS (108 aa). The span at 631–640 shows a compositional bias: polar residues; it reads ITKTNPTDEQ. Low complexity-rich tracts occupy residues 641-664 and 724-750; these read TTTPKSITKTTTTTTTANSTSTSS and NNNNNNSNSNSNSNSNNNSKRSSVSSF. Acidic residues predominate over residues 826-835; it reads ILDEDDELMF.

This is an uncharacterized protein from Dictyostelium discoideum (Social amoeba).